The sequence spans 95 residues: Cerebratulus toxin A-III (95 aa).

3 disulfide bridges follow: Cys17–Cys38, Cys23–Cys34, and Cys48–Cys61.

This sequence belongs to the worm cytolysin family.

The protein localises to the secreted. Permeabilizes a variety of cells. Forms large pores which allows the release of large proteins almost as rapidly as small organic molecules and inorganic ions. At sublytic concentrations, the toxin also inhibits protein kinase C and endogenous voltage-gated cation selective (sodium, calcium) channels occurring in the nervous and cardiovascular systems. The protein is Cerebratulus toxin A-III of Cerebratulus lacteus (Milky ribbon worm).